A 347-amino-acid chain; its full sequence is Probable dual-specificity RNA methyltransferase RlmN (347 aa).

Residue Glu-93 is the Proton acceptor of the active site. In terms of domain architecture, Radical SAM core spans 99–333 (TEKRLTACLS…VSLRKSRGLD (235 aa)). Cys-106 and Cys-338 form a disulfide bridge. [4Fe-4S] cluster contacts are provided by Cys-113, Cys-117, and Cys-120. S-adenosyl-L-methionine is bound by residues 160–161 (GE), Ser-190, 219–221 (SLH), and Asn-295. The S-methylcysteine intermediate role is filled by Cys-338.

Belongs to the radical SAM superfamily. RlmN family. [4Fe-4S] cluster serves as cofactor.

Its subcellular location is the cytoplasm. It carries out the reaction adenosine(2503) in 23S rRNA + 2 reduced [2Fe-2S]-[ferredoxin] + 2 S-adenosyl-L-methionine = 2-methyladenosine(2503) in 23S rRNA + 5'-deoxyadenosine + L-methionine + 2 oxidized [2Fe-2S]-[ferredoxin] + S-adenosyl-L-homocysteine. The enzyme catalyses adenosine(37) in tRNA + 2 reduced [2Fe-2S]-[ferredoxin] + 2 S-adenosyl-L-methionine = 2-methyladenosine(37) in tRNA + 5'-deoxyadenosine + L-methionine + 2 oxidized [2Fe-2S]-[ferredoxin] + S-adenosyl-L-homocysteine. In terms of biological role, specifically methylates position 2 of adenine 2503 in 23S rRNA and position 2 of adenine 37 in tRNAs. The sequence is that of Probable dual-specificity RNA methyltransferase RlmN from Prochlorococcus marinus (strain MIT 9301).